Here is an 89-residue protein sequence, read N- to C-terminus: Small ribosomal subunit protein bS20 (89 aa).

The protein belongs to the bacterial ribosomal protein bS20 family.

Functionally, binds directly to 16S ribosomal RNA. This chain is Small ribosomal subunit protein bS20, found in Phenylobacterium zucineum (strain HLK1).